The chain runs to 481 residues: uncharacterized protein (481 aa).

10 helical membrane-spanning segments follow: residues 30–50 (TIII…FVQF), 96–116 (AIAL…FIGM), 154–174 (CMAV…FNSV), 196–216 (ISLV…IAII), 220–240 (LVPM…GMHI), 250–270 (IVQS…ALVS), 311–331 (MLGV…IILL), 354–374 (IGEF…YSSI), 391–411 (KPWL…FGAV), and 424–444 (VMAV…PIVW).

This sequence belongs to the alanine or glycine:cation symporter (AGCS) (TC 2.A.25) family.

Its subcellular location is the cell inner membrane. This is an uncharacterized protein from Haemophilus influenzae (strain ATCC 51907 / DSM 11121 / KW20 / Rd).